The sequence spans 949 residues: Pyruvate, phosphate dikinase, chloroplastic (949 aa).

A chloroplast-targeting transit peptide spans 1-74 (MASAFKGILI…VMAPASDPTS (74 aa)). Position 530 is a phosphothreonine; by PDRP1 (threonine 530). Histidine 532 (tele-phosphohistidine intermediate) is an active-site residue. Substrate-binding residues include arginine 638, arginine 695, glutamate 824, glycine 845, threonine 846, asparagine 847, and aspartate 848. Glutamate 824 contributes to the Mg(2+) binding site. Aspartate 848 provides a ligand contact to Mg(2+). Cysteine 910 acts as the Proton donor in catalysis.

It belongs to the PEP-utilizing enzyme family. As to quaternary structure, homodimer. The cofactor is Mg(2+). Post-translationally, phosphorylation of Thr-530 in the dark inactivates the enzyme. Dephosphorylation upon light stimulation reactivates the enzyme.

Its subcellular location is the plastid. It localises to the chloroplast. It carries out the reaction pyruvate + phosphate + ATP = phosphoenolpyruvate + AMP + diphosphate + H(+). Activated by light-induced dephosphorylation. Inhibited by dark-induced phosphorylation. Both reactions are catalyzed by PDRP1. Its function is as follows. Formation of phosphoenolpyruvate, which is the primary acceptor of CO(2) in C4 and some Crassulacean acid metabolism plants. The polypeptide is Pyruvate, phosphate dikinase, chloroplastic (PPD) (Mesembryanthemum crystallinum (Common ice plant)).